Here is a 597-residue protein sequence, read N- to C-terminus: Sulfite reductase [NADPH] flavoprotein alpha-component (597 aa).

Residues 62 to 200 enclose the Flavodoxin-like domain; that stretch reads VTVLSASQTG…TADKWIQDVV (139 aa). FMN-binding positions include 68-73, 115-118, and 151-160; these read SQTGNA, STQG, and LGDTSYPNFC. Residues 232–446 form the FAD-binding FR-type domain; the sequence is ENPYTAKLIT…VEPNDNFRLP (215 aa). Residues T320, N354, 384–387, 402–404, and 417–420 each bind FAD; these read RLYS, SVG, and GVAS. Residues 517–518, 523–527, and D559 each bind NADP(+); these read SR and KIYVQ. Y597 contacts FAD.

The protein belongs to the NADPH-dependent sulphite reductase flavoprotein subunit CysJ family. It in the N-terminal section; belongs to the flavodoxin family. In the C-terminal section; belongs to the flavoprotein pyridine nucleotide cytochrome reductase family. Alpha(8)-beta(8). The alpha component is a flavoprotein, the beta component is a hemoprotein. The cofactor is FAD. FMN serves as cofactor.

The catalysed reaction is hydrogen sulfide + 3 NADP(+) + 3 H2O = sulfite + 3 NADPH + 4 H(+). It functions in the pathway sulfur metabolism; hydrogen sulfide biosynthesis; hydrogen sulfide from sulfite (NADPH route): step 1/1. Functionally, component of the sulfite reductase complex that catalyzes the 6-electron reduction of sulfite to sulfide. This is one of several activities required for the biosynthesis of L-cysteine from sulfate. The flavoprotein component catalyzes the electron flow from NADPH -&gt; FAD -&gt; FMN to the hemoprotein component. The chain is Sulfite reductase [NADPH] flavoprotein alpha-component from Mannheimia succiniciproducens (strain KCTC 0769BP / MBEL55E).